The following is a 302-amino-acid chain: Haloalkane dehalogenase (302 aa).

An AB hydrolase-1 domain is found at Pro-48–Ile-152. Asp-123 acts as the Nucleophile in catalysis. The active-site Proton donor is Asp-249. The Proton acceptor role is filled by His-278.

Belongs to the haloalkane dehalogenase family. Type 1 subfamily. As to quaternary structure, monomer.

It catalyses the reaction 1-haloalkane + H2O = a halide anion + a primary alcohol + H(+). Catalyzes hydrolytic cleavage of carbon-halogen bonds in halogenated aliphatic compounds, leading to the formation of the corresponding primary alcohols, halide ions and protons. The polypeptide is Haloalkane dehalogenase (Caulobacter vibrioides (strain ATCC 19089 / CIP 103742 / CB 15) (Caulobacter crescentus)).